The chain runs to 472 residues: Uronate isomerase (472 aa).

The protein belongs to the metallo-dependent hydrolases superfamily. Uronate isomerase family.

The catalysed reaction is D-glucuronate = D-fructuronate. It carries out the reaction aldehydo-D-galacturonate = keto-D-tagaturonate. It participates in carbohydrate metabolism; pentose and glucuronate interconversion. This is Uronate isomerase from Oceanobacillus iheyensis (strain DSM 14371 / CIP 107618 / JCM 11309 / KCTC 3954 / HTE831).